We begin with the raw amino-acid sequence, 234 residues long: Nuclear transcription factor Y subunit C-1 (234 aa).

Disordered stretches follow at residues 1 to 20 (MDTN…PPPP) and 205 to 234 (SVWQ…DGQG). Residues 7 to 20 (QPPPSAAGIPPPPP) show a composition bias toward pro residues. Residues 209-219 (TSTGTGDDVSY) are compositionally biased toward low complexity. Positions 220–234 (GSGGSSGQGNLDGQG) are enriched in gly residues.

Belongs to the NFYC/HAP5 subunit family. Heterotrimeric transcription factor composed of three components, NF-YA, NF-YB and NF-YC. NF-YB and NF-YC must interact and dimerize for NF-YA association and DNA binding. Ubiquitous. Present in etiolated seedlings.

It localises to the nucleus. Functionally, stimulates the transcription of various genes by recognizing and binding to a CCAAT motif in promoters. The protein is Nuclear transcription factor Y subunit C-1 (NFYC1) of Arabidopsis thaliana (Mouse-ear cress).